The following is a 283-amino-acid chain: NAD kinase (283 aa).

D68 functions as the Proton acceptor in the catalytic mechanism. Residues 68–69, 142–143, R153, D172, 183–188, and Q242 contribute to the NAD(+) site; these read DG, ND, and TAYSLS.

The protein belongs to the NAD kinase family. It depends on a divalent metal cation as a cofactor.

It is found in the cytoplasm. The enzyme catalyses NAD(+) + ATP = ADP + NADP(+) + H(+). Involved in the regulation of the intracellular balance of NAD and NADP, and is a key enzyme in the biosynthesis of NADP. Catalyzes specifically the phosphorylation on 2'-hydroxyl of the adenosine moiety of NAD to yield NADP. This chain is NAD kinase, found in Caldanaerobacter subterraneus subsp. tengcongensis (strain DSM 15242 / JCM 11007 / NBRC 100824 / MB4) (Thermoanaerobacter tengcongensis).